Here is a 71-residue protein sequence, read N- to C-terminus: uncharacterized protein (71 aa).

A helical transmembrane segment spans residues 24–44 (FGGGGLSTAIYSIFAFFSIPL).

The protein resides in the membrane. This is an uncharacterized protein from Schizosaccharomyces pombe (strain 972 / ATCC 24843) (Fission yeast).